A 477-amino-acid chain; its full sequence is Glutamate--tRNA ligase (477 aa).

Positions 8–18 (PSPTGTLHIGT) match the 'HIGH' region motif. The 'KMSKS' region motif lies at 247–251 (KLSKR). Lysine 250 serves as a coordination point for ATP.

Belongs to the class-I aminoacyl-tRNA synthetase family. Glutamate--tRNA ligase type 1 subfamily. In terms of assembly, monomer.

It localises to the cytoplasm. The catalysed reaction is tRNA(Glu) + L-glutamate + ATP = L-glutamyl-tRNA(Glu) + AMP + diphosphate. Functionally, catalyzes the attachment of glutamate to tRNA(Glu) in a two-step reaction: glutamate is first activated by ATP to form Glu-AMP and then transferred to the acceptor end of tRNA(Glu). In Parasynechococcus marenigrum (strain WH8102), this protein is Glutamate--tRNA ligase.